We begin with the raw amino-acid sequence, 76 residues long: UPF0346 protein LBUL_1194 (76 aa).

The protein belongs to the UPF0346 family.

This Lactobacillus delbrueckii subsp. bulgaricus (strain ATCC BAA-365 / Lb-18) protein is UPF0346 protein LBUL_1194.